The chain runs to 188 residues: GTP cyclohydrolase 1 (188 aa).

C76, H79, and C148 together coordinate Zn(2+).

It belongs to the GTP cyclohydrolase I family. As to quaternary structure, toroid-shaped homodecamer, composed of two pentamers of five dimers.

It carries out the reaction GTP + H2O = 7,8-dihydroneopterin 3'-triphosphate + formate + H(+). It functions in the pathway cofactor biosynthesis; 7,8-dihydroneopterin triphosphate biosynthesis; 7,8-dihydroneopterin triphosphate from GTP: step 1/1. This chain is GTP cyclohydrolase 1, found in Caldanaerobacter subterraneus subsp. tengcongensis (strain DSM 15242 / JCM 11007 / NBRC 100824 / MB4) (Thermoanaerobacter tengcongensis).